A 166-amino-acid chain; its full sequence is Phosphopantetheine adenylyltransferase (166 aa).

S10 is a substrate binding site. Residues S10–F11 and H18 each bind ATP. Positions 42, 79, and 93 each coordinate substrate. ATP contacts are provided by residues G94–R96, E104, and V129–T135.

Belongs to the bacterial CoaD family. In terms of assembly, homohexamer. Requires Mg(2+) as cofactor.

It is found in the cytoplasm. It catalyses the reaction (R)-4'-phosphopantetheine + ATP + H(+) = 3'-dephospho-CoA + diphosphate. It functions in the pathway cofactor biosynthesis; coenzyme A biosynthesis; CoA from (R)-pantothenate: step 4/5. Its function is as follows. Reversibly transfers an adenylyl group from ATP to 4'-phosphopantetheine, yielding dephospho-CoA (dPCoA) and pyrophosphate. In Methylobacterium sp. (strain 4-46), this protein is Phosphopantetheine adenylyltransferase.